We begin with the raw amino-acid sequence, 1078 residues long: MPRRKQEQPKRLPSHVSRQDEAEGDFSEGEQWYGNSSETPSEASYGEVQENYKLSLEDRIQEQSTSPDTSLGSATPSSHTLELVALDGEVLRDSLQCQGHLSPGVSSVCDDDPPSSNKPLSSNLRRLLEAGSLKLDGTANGRVESPVNVGPSLSFSPPSHHAQQLSVLARKLAEKQDQSDQFTPSNRFIWNQGKWLPNSTTTCGLSPDSAILKLKAAANAVLQDKSLSRTEESLRFESFSSPFSSQSASSTLAALSKKVSERSLTPGQEHPPPASSFLSLASMTSSAALLKEVAARAAGSLLAEKSSLLPDDPLPLPSSEKKPEKVTPPPPPPPPTAQPPQSLELLLLPVSKGRASKPSNSAPEEESGKPFQCPICGLVIKRKSYWKRHMVIHTGLKSHQCPLCPFRCARKDNLKSHMKVHQHQDRGETFQCQLCPFTSSRHFSLKLHMRCHQHFLRTEAKVKEEIPDPDVKGSPHLSDSGCLGQQREGGGTELVGTVMTSNTPERTGQGGAGVAPLLVKEEPKEDNGLPTSFTLNAADRPANHTKLKDPSEYVSNSAAVLFSQDISVKMASDFLMKLSAANQKEPMNLNFKVKEEPKEEESLSMPLPRSSYVFSPEPEVSTPSVSEDPLTPQEGKGSVLRRDMSAKAASELLMKLSAESYKETQAVTVKEEPMEVDIQDSPASISPSRNIGYSTLMGREKTEPLQKLPEGRVPPERNLFSQDISVKMASELLFQLSEKVSKEHNHTKENAMRTTTSPFFSEDTFRQSPFTSNSKDLLPGESVLHGRVSAPETEKIVLEAGNGLPSWKFNDQLFPCDVCGKVFGRQQTLSRHLSLHTEERKYKCHLCPYAAKCRANLNQHLTVHSVKLVSTDTEDIVSAVTSEGSDGKKHPYYYSCHVCGFETELNVQFVSHMSLHVDKEQWMFSICCTACDFVTMEEAEIKTHIGTKHTGDDRKTPSESNSPSSSSLSTLSDSANGKDDSDSSQKNKGGNNLLVISVVPGSQPSLNNEEKPEKGFECVFCNFVCKTKNMFERHLQIHLITRMFECDVCHKFMKTPEQLLEHKKCHTVPTGGLNSGQW.

Positions M1–K10 are enriched in basic and acidic residues. Residues M1–S14 form a mediates direct interaction with RBBP4 region. Residues M1–P76 form a disordered region. Residues R3–K5 carry the RRK motif; mediates NuRD recruitment to telomeres motif. 2 stretches are compositionally biased toward polar residues: residues Y33–E42 and E62–P76. Residues K175, K215, and K225 each participate in a glycyl lysine isopeptide (Lys-Gly) (interchain with G-Cter in SUMO2) cross-link. The interval S307 to Q341 is disordered. Positions V326–Q338 are enriched in pro residues. Glycyl lysine isopeptide (Lys-Gly) (interchain with G-Cter in SUMO2) cross-links involve residues K357 and K369. 3 consecutive C2H2-type zinc fingers follow at residues F371–H393, H399–H421, and F430–H452. Residues K463, K472, K520, K546, K577, K584, and K594 each participate in a glycyl lysine isopeptide (Lys-Gly) (interchain with G-Cter in SUMO2) cross-link. The interval I466 to G490 is disordered. The disordered stretch occupies residues K594 to L640. Over residues V613–E627 the composition is skewed to low complexity. Residues K636 and K655 each participate in a glycyl lysine isopeptide (Lys-Gly) (interchain with G-Cter in SUMO2) cross-link. K670 is covalently cross-linked (Glycyl lysine isopeptide (Lys-Gly) (interchain with G-Cter in SUMO1); alternate). A Glycyl lysine isopeptide (Lys-Gly) (interchain with G-Cter in SUMO2); alternate cross-link involves residue K670. Residues K701, K707, K739, K775, and K795 each participate in a glycyl lysine isopeptide (Lys-Gly) (interchain with G-Cter in SUMO2) cross-link. C2H2-type zinc fingers lie at residues F814–H836 and Y842–H864. Residues K867 and K888 each participate in a glycyl lysine isopeptide (Lys-Gly) (interchain with G-Cter in SUMO2) cross-link. 2 C2H2-type zinc fingers span residues Y894–H916 and I926–H949. Over residues I945 to P957 the composition is skewed to basic and acidic residues. A disordered region spans residues I945–G990. A Glycyl lysine isopeptide (Lys-Gly) (interchain with G-Cter in SUMO2) cross-link involves residue K955. Residues S958–S974 show a composition bias toward low complexity. Residues N976 to Q985 are compositionally biased toward basic and acidic residues. K1011 is covalently cross-linked (Glycyl lysine isopeptide (Lys-Gly) (interchain with G-Cter in SUMO2)). 2 consecutive C2H2-type zinc fingers follow at residues F1016–H1038 and F1044–H1066.

The protein belongs to the krueppel C2H2-type zinc-finger protein family. In terms of assembly, part of a transcription inhibitory ribonucleoprotein complex composed at least of the circular RNA circZNF827, HNRNPK and HNRNPL. Interacts with the nucleosome remodeling and histone deacetylase/NuRD complex. Interacts with RBBP4; the interaction is direct and recruits RBBP4, a component of the NuRD complex, to telomeres.

The protein resides in the nucleus. The protein localises to the chromosome. Its subcellular location is the telomere. Its function is as follows. As part of a ribonucleoprotein complex composed at least of HNRNPK, HNRNPL and the circular RNA circZNF827 that nucleates the complex on chromatin, may negatively regulate the transcription of genes involved in neuronal differentiation. Could also recruit the nucleosome remodeling and histone deacetylase/NuRD complex to telomeric regions of chromosomes to regulate chromatin remodeling as part of telomere maintenance. The protein is Zinc finger protein 827 (Znf827) of Mus musculus (Mouse).